Consider the following 175-residue polypeptide: Transcription factor HES-3 (175 aa).

The region spanning 1 to 49 is the bHLH domain; that stretch reads MEKKRRARINLSLEQLRSLLERHYSHQIRKRKLEKADILELSVKYVRSL. The region spanning 65–98 is the Orange domain; it reads YPSGFRGGLPGSSQRLRPGEDDSGLRCPLLLQRR. Residues 124–145 show a composition bias toward low complexity; that stretch reads PGPPAGGSQSPQSPFPPLGGLL. Residues 124 to 175 are disordered; that stretch reads PGPPAGGSQSPQSPFPPLGGLLESSTGILAPPPASNCQAENPRPGFRVWRPW. The WRPW motif signature appears at 172–175; the sequence is WRPW.

Transcription repression requires formation of a complex with a corepressor protein of the Groucho/TLE family. Expressed exclusively in Purkinje cells.

Its subcellular location is the nucleus. Functionally, transcriptional repressor of genes that require a bHLH protein for their transcription. The polypeptide is Transcription factor HES-3 (Hes3) (Rattus norvegicus (Rat)).